Reading from the N-terminus, the 572-residue chain is Beta-fructofuranosidase, insoluble isoenzyme CWINV5 (572 aa).

The first 23 residues, 1–23, serve as a signal peptide directing secretion; the sequence is MANIVWCNIAMFLLVSLFLTDDA. Substrate is bound by residues 54 to 57 and Q73; that span reads WMND. Residue D57 is part of the active site. Residue N84 is glycosylated (N-linked (GlcNAc...) asparagine). 118–119 provides a ligand contact to substrate; the sequence is WS. N-linked (GlcNAc...) asparagine glycosylation is found at N152 and N179. Substrate is bound by residues 184–185 and E239; that span reads RD. N-linked (GlcNAc...) asparagine glycans are attached at residues N333 and N438. A disulfide bridge links C434 with C481.

The protein belongs to the glycosyl hydrolase 32 family. Expressed in flowers, and, to a lower extent, in leaves.

It is found in the secreted. It localises to the extracellular space. Its subcellular location is the apoplast. The protein resides in the cell wall. The enzyme catalyses Hydrolysis of terminal non-reducing beta-D-fructofuranoside residues in beta-D-fructofuranosides.. The protein is Beta-fructofuranosidase, insoluble isoenzyme CWINV5 (CWINV5) of Arabidopsis thaliana (Mouse-ear cress).